A 421-amino-acid chain; its full sequence is MPATDIDTAMLALGENARRASRAMMRATGAAKNHALQAMAEALRDNRAELQAANAQDIDAARAGGLEPALLDRLTLSDKAIDRMAEGLLQVAALPDPIGSTTASALRPNGMRVAQMRVPLGVIGIIYESRPNVTIDAAALCLKSGNATILRGGSEALHSNVALGRIVQAGLQAAALPAEAVQVVGTTDRAAVGKLITMTEHIDVIVPRGGKGLIARLASEARVPLIKHLDGNCHVYIDAAADPQKAHTIAFNAKTYRYGICGAMETLLVDAGVAVSILPRLAAAFSAHGVELRGCPRTLEIVPSATPATDDDWATEYLAPILAVRIVDSLDQAIEHIARWGSGHTDAIVTEDLSAAQRFQREVDSSSVYVNLPTCFADGFEYGLGAEIGISTNRLHARGPVGLEGLTTLKWVLNGDGQTRG.

This sequence belongs to the gamma-glutamyl phosphate reductase family.

The protein resides in the cytoplasm. It carries out the reaction L-glutamate 5-semialdehyde + phosphate + NADP(+) = L-glutamyl 5-phosphate + NADPH + H(+). It participates in amino-acid biosynthesis; L-proline biosynthesis; L-glutamate 5-semialdehyde from L-glutamate: step 2/2. Its function is as follows. Catalyzes the NADPH-dependent reduction of L-glutamate 5-phosphate into L-glutamate 5-semialdehyde and phosphate. The product spontaneously undergoes cyclization to form 1-pyrroline-5-carboxylate. This is Gamma-glutamyl phosphate reductase from Bordetella petrii (strain ATCC BAA-461 / DSM 12804 / CCUG 43448).